The chain runs to 144 residues: Protein E6 (144 aa).

Zinc fingers lie at residues 32 to 68 and 105 to 141; these read CAFC…CALC and CWLC…CLHC.

Belongs to the papillomaviridae E6 protein family. As to quaternary structure, forms homodimers. Interacts with ubiquitin-protein ligase UBE3A/E6-AP; this interaction stimulates UBE3A ubiquitin activity. Interacts with host TP53 and EP300; this interaction inhibits TP53 activity.

Its subcellular location is the host cytoplasm. The protein resides in the host nucleus. Its function is as follows. Plays a major role in the induction and maintenance of cellular transformation. E6 associates with host UBE3A/E6-AP ubiquitin-protein ligase and modulates its activity. Sequesters tumor suppressor TP53 in the host cytoplasm and modulates its activity by interacting with host EP300 that results in the reduction of TP53 acetylation and activation. In turn, apoptosis induced by DNA damage is inhibited. E6 also protects host keratinocytes from apoptosis by mediating the degradation of host BAK1. May also inhibit host immune response. This is Protein E6 from Homo sapiens (Human).